A 657-amino-acid chain; its full sequence is Methylenetetrahydrofolate reductase 1 (657 aa).

Catalysis depends on Glu-18, which acts as the Proton donor/acceptor. NAD(+)-binding positions include 18-23 (EFFPPK) and 49-50 (TW). Residues 49 to 50 (TW), His-78, and 108 to 110 (RGD) contribute to the FAD site. Asp-110 is a binding site for substrate. Ser-120 is modified (phosphoserine). FAD-binding positions include 129-130 (YA), Tyr-152, Asp-171, and Lys-178. Positions 189 and 286 each coordinate substrate. Phosphoserine is present on Ser-301. The tract at residues 308-329 (VNESSEEEGEDETSGEIGSIEN) is disordered. Acidic residues predominate over residues 311–321 (SSEEEGEDETS). The residue at position 358 (Ser-358) is a Phosphoserine.

The protein belongs to the methylenetetrahydrofolate reductase family. FAD serves as cofactor.

The enzyme catalyses (6S)-5-methyl-5,6,7,8-tetrahydrofolate + NADP(+) = (6R)-5,10-methylene-5,6,7,8-tetrahydrofolate + NADPH + H(+). It carries out the reaction (6S)-5-methyl-5,6,7,8-tetrahydrofolate + NAD(+) = (6R)-5,10-methylene-5,6,7,8-tetrahydrofolate + NADH + H(+). The protein operates within one-carbon metabolism; tetrahydrofolate interconversion. This Saccharomyces cerevisiae (strain ATCC 204508 / S288c) (Baker's yeast) protein is Methylenetetrahydrofolate reductase 1 (MET12).